The chain runs to 283 residues: NAD kinase (283 aa).

The Proton acceptor role is filled by Asp66. Residues 66–67 (DG), 140–141 (ND), Arg151, Lys168, Asp170, 181–186 (TGYCLS), and Gln240 each bind NAD(+).

The protein belongs to the NAD kinase family. The cofactor is a divalent metal cation.

Its subcellular location is the cytoplasm. The enzyme catalyses NAD(+) + ATP = ADP + NADP(+) + H(+). Functionally, involved in the regulation of the intracellular balance of NAD and NADP, and is a key enzyme in the biosynthesis of NADP. Catalyzes specifically the phosphorylation on 2'-hydroxyl of the adenosine moiety of NAD to yield NADP. The chain is NAD kinase from Geobacter metallireducens (strain ATCC 53774 / DSM 7210 / GS-15).